A 187-amino-acid polypeptide reads, in one-letter code: Elongation factor P (187 aa).

This sequence belongs to the elongation factor P family.

It localises to the cytoplasm. The protein operates within protein biosynthesis; polypeptide chain elongation. Functionally, involved in peptide bond synthesis. Stimulates efficient translation and peptide-bond synthesis on native or reconstituted 70S ribosomes in vitro. Probably functions indirectly by altering the affinity of the ribosome for aminoacyl-tRNA, thus increasing their reactivity as acceptors for peptidyl transferase. The protein is Elongation factor P of Azobacteroides pseudotrichonymphae genomovar. CFP2.